A 246-amino-acid chain; its full sequence is Mitochondrial inner membrane protease ATP23 homolog (246 aa).

Residue histidine 125 participates in a divalent metal cation binding. Glutamate 126 is an active-site residue. Histidine 129 provides a ligand contact to a divalent metal cation.

The protein belongs to the peptidase M76 family. In terms of assembly, interacts with XRCC6.

This is Mitochondrial inner membrane protease ATP23 homolog from Homo sapiens (Human).